A 404-amino-acid chain; its full sequence is Flavohemoprotein (404 aa).

The 138-residue stretch at 1-138 folds into the Globin domain; that stretch reads MLSEQTRSLV…LADTLIGIEN (138 aa). His85 serves as a coordination point for heme b. Active-site charge relay system residues include Tyr95 and Glu137. A reductase region spans residues 149-404; that stretch reads GGWSGWRPFR…EVFGSHPGDD (256 aa). Residues 152–263 form the FAD-binding FR-type domain; sequence SGWRPFRVAK…SAPQGDFFLH (112 aa). FAD is bound by residues Tyr190 and 206–209; that span reads RQYS. Residue 276–281 participates in NADP(+) binding; the sequence is GVGQTP. 396–399 contacts FAD; the sequence is VFGS.

Belongs to the globin family. Two-domain flavohemoproteins subfamily. This sequence in the C-terminal section; belongs to the flavoprotein pyridine nucleotide cytochrome reductase family. Requires heme b as cofactor. FAD is required as a cofactor.

It catalyses the reaction 2 nitric oxide + NADPH + 2 O2 = 2 nitrate + NADP(+) + H(+). It carries out the reaction 2 nitric oxide + NADH + 2 O2 = 2 nitrate + NAD(+) + H(+). Functionally, is involved in NO detoxification in an aerobic process, termed nitric oxide dioxygenase (NOD) reaction that utilizes O(2) and NAD(P)H to convert NO to nitrate, which protects the bacterium from various noxious nitrogen compounds. Therefore, plays a central role in the inducible response to nitrosative stress. The polypeptide is Flavohemoprotein (Chromobacterium violaceum (strain ATCC 12472 / DSM 30191 / JCM 1249 / CCUG 213 / NBRC 12614 / NCIMB 9131 / NCTC 9757 / MK)).